A 371-amino-acid polypeptide reads, in one-letter code: Methylthioribose-1-phosphate isomerase (371 aa).

Residues 53-55 (RGA), Arg90, and Gln203 each bind substrate. Asp243 acts as the Proton donor in catalysis. 253–254 (NK) lines the substrate pocket.

Belongs to the eIF-2B alpha/beta/delta subunits family. MtnA subfamily.

The enzyme catalyses 5-(methylsulfanyl)-alpha-D-ribose 1-phosphate = 5-(methylsulfanyl)-D-ribulose 1-phosphate. The catalysed reaction is 5-deoxy-alpha-D-ribose 1-phosphate = 5-deoxy-D-ribulose 1-phosphate. Its pathway is amino-acid biosynthesis; L-methionine biosynthesis via salvage pathway; L-methionine from S-methyl-5-thio-alpha-D-ribose 1-phosphate: step 1/6. Its function is as follows. Catalyzes the interconversion of methylthioribose-1-phosphate (MTR-1-P) into methylthioribulose-1-phosphate (MTRu-1-P). Also catalyzes the interconversion of 5-deoxyribose 1-phosphate and 5-deoxyribulose 1-phosphate. Part of a bifunctional DHAP-shunt salvage pathway for SAM by-products. The polypeptide is Methylthioribose-1-phosphate isomerase (Escherichia coli O45:K1 (strain S88 / ExPEC)).